The following is a 673-amino-acid chain: Vasorin (673 aa).

The first 23 residues, 1–23, serve as a signal peptide directing secretion; it reads MCSRVPLLLPLLLLLALGPGVQG. The LRRNT domain occupies 24–51; that stretch reads CPSGCQCSQPQTVFCTARQGTTVPRDVP. The Extracellular segment spans residues 24–575; sequence CPSGCQCSQP…VTQAREGNLP (552 aa). 10 LRR repeats span residues 52 to 74, 77 to 98, 101 to 122, 125 to 146, 149 to 170, 171 to 191, 193 to 214, 217 to 238, 240 to 262, and 265 to 287; these read PDTVGLYVFENGITMLDAGSFAG, GLQLLDLSQNQIASLPSGVFQP, NLSNLDLTANRLHEITNETFRG, RLERLYLGKNRIRHIQPGAFDT, RLLELKLQDNELRALPPLRLPR, LLLLDLSHNSLLALEPGILDT, NVEALRLAGLGLQQLDEGLFSR, NLHDLDVSDNQLERVPPVIRGL, GLTRLRLAGNTRIAQLRPEDLAG, and ALQELDVSNLSLQALPGDLSGLF. A glycan (N-linked (GlcNAc...) asparagine) is linked at Asn101. Asn117 is a glycosylation site (N-linked (GlcNAc...) (complex) asparagine). N-linked (GlcNAc...) asparagine glycosylation is present at Asn273. The region spanning 298–351 is the LRRCT domain; sequence NPFNCVCPLSWFGPWVRESHVTLASPEETRCHFPPKNAGRLLLELDYADFGCPA. Residues 358–370 show a composition bias toward low complexity; that stretch reads VPTTRPVVREPTA. The disordered stretch occupies residues 358–404; sequence VPTTRPVVREPTALSSSLAPTWLSPTEPATEAPSPPSTAPPTVGPVP. Residues 390–404 show a composition bias toward pro residues; the sequence is PSPPSTAPPTVGPVP. The EGF-like domain occupies 405–442; it reads QPQDCPPSTCLNGGTCHLGTRHHLACLCPEGFTGLYCE. 3 cysteine pairs are disulfide-bonded: Cys409–Cys420, Cys414–Cys430, and Cys432–Cys441. Positions 460 to 558 constitute a Fibronectin type-III domain; that stretch reads PPRSLTLGIE…ACGEAHTPPA (99 aa). Asn500 and Asn528 each carry an N-linked (GlcNAc...) asparagine glycan. A helical membrane pass occupies residues 576–596; sequence LLIAPALAAVLLAALAAVGAA. Over 597 to 673 the chain is Cytoplasmic; that stretch reads YCVRRGRAMA…QSPLHAKPYI (77 aa).

In terms of assembly, interacts with TGFB1, TGFB2 and TGFB3. N-glycosylated. N-glycan heterogeneity at Asn-117: Hex5HexNAc4 (minor), dHex1Hex5HexNAc4 (major), Hex6HexNAc5 (minor) and dHex1Hex6HexNAc5 (minor). In terms of tissue distribution, expressed at highest levels in aorta, at intermediate levels in kidney and placenta and at lowest levels in brain, heart, liver, lung and skeletal muscle. Within the aorta, the strongest expression is found in the tunica media of the proximal ascending aorta, the descending thoracic aorta, the abdominal aorta and the coronary arteries. Within the kidney, expression is found in the interstitial cells.

The protein resides in the membrane. The protein localises to the secreted. Its function is as follows. May act as an inhibitor of TGF-beta signaling. The sequence is that of Vasorin (VASN) from Homo sapiens (Human).